A 204-amino-acid polypeptide reads, in one-letter code: MGAYKYMQELWRKKQSNVMRFLLRVRCWQYRQLSSLHRAPRPTRPDKARRLGYKAKQGYVIYRIRVRRGGRKRPVPKGATYGKPVHHGVNQIKFARSLQSVAEERAGRHCGGLRVLNSYWVGEDSTYKFFEVILIDTFHKAIRRNPDTQWITKAVRKHREMRGLTSAGKKSRGLGKGHKFHLTIGGSRRAAWKRRNTLQLHRYR.

This sequence belongs to the eukaryotic ribosomal protein eL15 family. Component of the large ribosomal subunit.

It is found in the cytoplasm. Functionally, component of the large ribosomal subunit. The ribosome is a large ribonucleoprotein complex responsible for the synthesis of proteins in the cell. The protein is Large ribosomal subunit protein eL15 (rpl15) of Hypophthalmichthys molitrix (Silver carp).